The following is a 377-amino-acid chain: Queuine tRNA-ribosyltransferase (377 aa).

D89 acts as the Proton acceptor in catalysis. Residues 89–93 (DSGGF), D143, Q188, and G215 each bind substrate. The RNA binding stretch occupies residues 246 to 252 (GVGKPED). D265 serves as the catalytic Nucleophile. The RNA binding; important for wobble base 34 recognition stretch occupies residues 270–274 (TRNAR). Residues C303, C305, C308, and H334 each coordinate Zn(2+).

Belongs to the queuine tRNA-ribosyltransferase family. As to quaternary structure, homodimer. Within each dimer, one monomer is responsible for RNA recognition and catalysis, while the other monomer binds to the replacement base PreQ1. The cofactor is Zn(2+).

It carries out the reaction 7-aminomethyl-7-carbaguanine + guanosine(34) in tRNA = 7-aminomethyl-7-carbaguanosine(34) in tRNA + guanine. The protein operates within tRNA modification; tRNA-queuosine biosynthesis. Its function is as follows. Catalyzes the base-exchange of a guanine (G) residue with the queuine precursor 7-aminomethyl-7-deazaguanine (PreQ1) at position 34 (anticodon wobble position) in tRNAs with GU(N) anticodons (tRNA-Asp, -Asn, -His and -Tyr). Catalysis occurs through a double-displacement mechanism. The nucleophile active site attacks the C1' of nucleotide 34 to detach the guanine base from the RNA, forming a covalent enzyme-RNA intermediate. The proton acceptor active site deprotonates the incoming PreQ1, allowing a nucleophilic attack on the C1' of the ribose to form the product. After dissociation, two additional enzymatic reactions on the tRNA convert PreQ1 to queuine (Q), resulting in the hypermodified nucleoside queuosine (7-(((4,5-cis-dihydroxy-2-cyclopenten-1-yl)amino)methyl)-7-deazaguanosine). This Acinetobacter baumannii (strain ACICU) protein is Queuine tRNA-ribosyltransferase.